The primary structure comprises 1292 residues: (E3-independent) E2 ubiquitin-conjugating enzyme (1292 aa).

Positions 1–37 (MADPAAPTPAAPAPAQAPAPAPEAVPAPAAAPVPAPA) are enriched in pro residues. Disordered regions lie at residues 1 to 56 (MADP…EAGS) and 85 to 114 (EDSDSEGEEEGRGSSGCSEAGGAGHEEGRA). The segment covering 38-56 (PASDSASGPSSDSGPEAGS) has biased composition (low complexity). Residues Ser-50, Ser-87, Ser-89, Ser-399, and Ser-401 each carry the phosphoserine modification. Disordered regions lie at residues 401–459 (SPDT…AGEQ), 472–519 (RLHS…IPLS), and 714–746 (IEESDYDSVEGSTSGASSDEWEDDSDSWETDNG). Residues 406–427 (CSRDHSMEDPDKKGESKTKSEA) show a composition bias toward basic and acidic residues. Ser-441 bears the Phosphoserine mark. A compositionally biased stretch (acidic residues) spans 478 to 490 (QDADDEAADDTDD). Phosphothreonine occurs at positions 488 and 491. The segment covering 491-510 (TSSVTSSASSTTSSQSGSGT) has biased composition (low complexity). A Nuclear localization signal motif is present at residues 512 to 536 (RKKSIPLSIKNLKRKHKRKKNKITR). Position 515 is a phosphoserine (Ser-515). Acidic residues predominate over residues 732–742 (DEWEDDSDSWE). A coiled-coil region spans residues 812 to 882 (RELKEAIKIL…IVEEEKMEAV (71 aa)). The residue at position 836 (Ser-836) is a Phosphoserine. Thr-838 carries the phosphothreonine modification. At Ser-839 the chain carries Phosphoserine. A compositionally biased stretch (basic and acidic residues) spans 882-893 (VPDVERKEDKPE). Residues 882-903 (VPDVERKEDKPEGQSPVKAEWP) form a disordered region. Position 896 is a phosphoserine (Ser-896). The 161-residue stretch at 953–1113 (KFFSTVRKEM…ALIRVVQSMT (161 aa)) folds into the UBC core domain. Cys-1040 acts as the Glycyl thioester intermediate in catalysis. The tract at residues 1160–1248 (NGVPKASSSP…KSYRSFLPEK (89 aa)) is disordered.

This sequence belongs to the ubiquitin-conjugating enzyme family. Interacts with CPNE1 (via VWFA domain) and CPNE4 (via VWFA domain). Interacts with UBR2. Phosphorylated. Phosphorylation affects subcellular location. In terms of processing, ubiquitinated: autoubiquitinates, possibly affecting its subcellular location. As to expression, predominantly expressed in skeletal muscle and heart.

It localises to the cytoplasm. The protein resides in the nucleus. The catalysed reaction is S-ubiquitinyl-[E1 ubiquitin-activating enzyme]-L-cysteine + [acceptor protein]-L-lysine = [E1 ubiquitin-activating enzyme]-L-cysteine + N(6)-monoubiquitinyl-[acceptor protein]-L-lysine.. Its pathway is protein modification; protein ubiquitination. Its activity is regulated as follows. inhibited by phenylarsine oxide (PAO). Functionally, E2/E3 hybrid ubiquitin-protein ligase that displays both E2 and E3 ligase activities and mediates monoubiquitination of target proteins. Negatively regulates TRAF6-mediated NF-kappa-B activation independently of its E2 activity. Acts as a positive regulator of BMP7 signaling by mediating monoubiquitination of SMAD6, thereby regulating adipogenesis. Mediates monoubiquitination at different sites of the nuclear localization signal (NLS) of BAP1, leading to cytoplasmic retention of BAP1. Also able to monoubiquitinate the NLS of other chromatin-associated proteins, such as INO80 and CXXC1, affecting their subcellular location. Acts as a regulator of retrograde transport by assisting the TRIM27:MAGEL2 E3 ubiquitin ligase complex to mediate 'Lys-63'-linked ubiquitination of WASHC1, leading to promote endosomal F-actin assembly. In Homo sapiens (Human), this protein is (E3-independent) E2 ubiquitin-conjugating enzyme (UBE2O).